Reading from the N-terminus, the 305-residue chain is Ribonuclease BN (305 aa).

Residues His64, His66, Asp68, His69, His141, Asp212, and His270 each coordinate Zn(2+). The active-site Proton acceptor is Asp68.

This sequence belongs to the RNase Z family. RNase BN subfamily. In terms of assembly, homodimer. Zn(2+) serves as cofactor.

Zinc phosphodiesterase, which has both exoribonuclease and endoribonuclease activities. This Citrobacter koseri (strain ATCC BAA-895 / CDC 4225-83 / SGSC4696) protein is Ribonuclease BN.